Consider the following 581-residue polypeptide: DNA polymerase alpha subunit B (581 aa).

This sequence belongs to the DNA polymerase alpha subunit B family. In terms of assembly, DNA polymerase alpha:primase is a four subunit enzyme complex, which is assembled throughout the cell cycle, and consists of the two DNA polymerase subunits A and B, and the DNA primase large and small subunits. Subunit B binds to subunit A.

It localises to the nucleus. May play an essential role at the early stage of chromosomal DNA replication by coupling the polymerase alpha/primase complex to the cellular replication machinery. Required for the distribution of pie-1 in cell divsion. The polypeptide is DNA polymerase alpha subunit B (div-1) (Caenorhabditis elegans).